The following is a 344-amino-acid chain: Protein BIM1 (344 aa).

At serine 2 the chain carries N-acetylserine. In terms of domain architecture, Calponin-homology (CH) spans 6 to 107 (GESRTELLTW…FLQWLKKHWI (102 aa)). Residues 126-173 (IITNNSATKPRTVSNPTTAKRSSSTGTGSAMSGGLATRHSSLGINGSR) form a disordered region. Residues 127–146 (ITNNSATKPRTVSNPTTAKR) are compositionally biased toward polar residues. The span at 147–159 (SSSTGTGSAMSGG) shows a compositional bias: low complexity. Serine 157 carries the phosphoserine modification. Residues 163–173 (RHSSLGINGSR) are compositionally biased toward polar residues. Residues 188 to 281 (ELTKSQETIG…LYATAEGFEM (94 aa)) enclose the EB1 C-terminal domain. A disordered region spans residues 292-312 (NLGEHGTVPNQGGYANSNGEV).

It belongs to the MAPRE family.

It localises to the cytoplasm. Its subcellular location is the cytoskeleton. In terms of biological role, binds microtubules. The sequence is that of Protein BIM1 (BIM1) from Saccharomyces cerevisiae (strain ATCC 204508 / S288c) (Baker's yeast).